A 201-amino-acid chain; its full sequence is Glycerol-3-phosphate acyltransferase (201 aa).

The next 5 membrane-spanning stretches (helical) occupy residues 10-30 (MLIG…GLIL), 60-80 (LAAA…LIAA), 86-106 (AAIA…WIGF), 116-136 (LGVL…AWIV), and 166-186 (ALAA…RANI).

It belongs to the PlsY family. As to quaternary structure, probably interacts with PlsX.

The protein resides in the cell inner membrane. It carries out the reaction an acyl phosphate + sn-glycerol 3-phosphate = a 1-acyl-sn-glycero-3-phosphate + phosphate. It functions in the pathway lipid metabolism; phospholipid metabolism. Functionally, catalyzes the transfer of an acyl group from acyl-phosphate (acyl-PO(4)) to glycerol-3-phosphate (G3P) to form lysophosphatidic acid (LPA). This enzyme utilizes acyl-phosphate as fatty acyl donor, but not acyl-CoA or acyl-ACP. The polypeptide is Glycerol-3-phosphate acyltransferase (Brucella canis (strain ATCC 23365 / NCTC 10854 / RM-666)).